The primary structure comprises 543 residues: CTP synthase (543 aa).

The segment at 1 to 265 is amidoligase domain; that stretch reads MTRYIFVTGG…DDFVVERFGL (265 aa). Ser13 contacts CTP. Ser13 lines the UTP pocket. ATP contacts are provided by residues 14–19 and Asp71; that span reads SLGKGI. The Mg(2+) site is built by Asp71 and Glu139. CTP is bound by residues 146–148, 186–191, and Lys222; these read DIE and KTKPTQ. Residues 186–191 and Lys222 each bind UTP; that span reads KTKPTQ. A Glutamine amidotransferase type-1 domain is found at 290 to 541; sequence TIAMVGKYME…VNAALAQKAK (252 aa). Gly351 contributes to the L-glutamine binding site. Catalysis depends on Cys378, which acts as the Nucleophile; for glutamine hydrolysis. Residues 379-382, Glu402, and Arg469 contribute to the L-glutamine site; that span reads LGMQ. Catalysis depends on residues His514 and Glu516.

Belongs to the CTP synthase family. As to quaternary structure, homotetramer.

It carries out the reaction UTP + L-glutamine + ATP + H2O = CTP + L-glutamate + ADP + phosphate + 2 H(+). It catalyses the reaction L-glutamine + H2O = L-glutamate + NH4(+). The catalysed reaction is UTP + NH4(+) + ATP = CTP + ADP + phosphate + 2 H(+). It participates in pyrimidine metabolism; CTP biosynthesis via de novo pathway; CTP from UDP: step 2/2. With respect to regulation, allosterically activated by GTP, when glutamine is the substrate; GTP has no effect on the reaction when ammonia is the substrate. The allosteric effector GTP functions by stabilizing the protein conformation that binds the tetrahedral intermediate(s) formed during glutamine hydrolysis. Inhibited by the product CTP, via allosteric rather than competitive inhibition. In terms of biological role, catalyzes the ATP-dependent amination of UTP to CTP with either L-glutamine or ammonia as the source of nitrogen. Regulates intracellular CTP levels through interactions with the four ribonucleotide triphosphates. This chain is CTP synthase, found in Ectopseudomonas mendocina (strain ymp) (Pseudomonas mendocina).